Consider the following 440-residue polypeptide: COP9 signalosome complex subunit 4 (440 aa).

Residues 216-386 form the PCI domain; the sequence is SNRQFLAASQ…RIIYFESGLE (171 aa).

This sequence belongs to the CSN4 family. As to quaternary structure, component of the COP9 signalosome (CSN) complex.

It is found in the cytoplasm. Its subcellular location is the nucleus. In terms of biological role, component of the COP9 signalosome (CSN) complex that acts as an regulator of the ubiquitin (Ubl) conjugation pathway by mediating the deneddylation of the cullin subunit of SCF-type E3 ubiquitin-protein ligase complexes. The CSN complex is involved in the regulation of the circadian clock through its control of the stability of the SCF(FWD1) complex. This is COP9 signalosome complex subunit 4 (csn-4) from Neurospora crassa (strain ATCC 24698 / 74-OR23-1A / CBS 708.71 / DSM 1257 / FGSC 987).